The chain runs to 734 residues: Meiotic driver SPOK1 (734 aa).

Residues 4-41 (KDRIAQLLRELEEAKARVEEAKAREAQERCEKERLQLE) adopt a coiled-coil conformation. Disordered stretches follow at residues 180–222 (ELTQ…ICSN) and 414–499 (LSSA…MADP). Residues 416 to 429 (SAPSSQNTDISEYT) show a composition bias toward polar residues. Residues 457 to 468 (NEHDEHDEDHSE) are compositionally biased toward basic and acidic residues.

The protein resides in the cytoplasm. It is found in the nucleus. In terms of biological role, promotes unequal transmission of alleles from the parental zygote to progeny spores by acting as poison/antidote system, leading to poisoning of progeny that do not inherit the allele. May possess DNA nuclease activity that leads to spore killing, and a kinase activity that confers resistance to the nuclease activity. Can suppress meiotic drive by the P.anserina SPOK2, SPOK3 and SPOK4 proteins. The sequence is that of Meiotic driver SPOK1 from Podospora comata.